Here is a 165-residue protein sequence, read N- to C-terminus: UPF0763 protein NIS_0363 (165 aa).

This sequence belongs to the UPF0763 family.

This is UPF0763 protein NIS_0363 from Nitratiruptor sp. (strain SB155-2).